Here is a 447-residue protein sequence, read N- to C-terminus: Omega-6 fatty acid desaturase, chloroplastic (447 aa).

The N-terminal 65 residues, 1–65, are a transit peptide targeting the chloroplast; sequence MESAITISNH…TRRKSTLVQA (65 aa). Valine 66 carries the post-translational modification N-acetylvaline. A Histidine box-1 motif is present at residues 171–175; the sequence is HDCAH. Positions 207-211 match the Histidine box-2 motif; it reads HDQHH. Positions 367 to 371 match the Histidine box-3 motif; that stretch reads HIPHH.

This sequence belongs to the fatty acid desaturase type 1 family.

It localises to the plastid. It is found in the chloroplast membrane. The enzyme catalyses a (9Z)-octadecenoyl-containing glycerolipid + 2 reduced [2Fe-2S]-[ferredoxin] + O2 + 2 H(+) = a (9Z,12Z)-octadecadienoyl-containing glycerolipid + 2 oxidized [2Fe-2S]-[ferredoxin] + 2 H2O. It participates in lipid metabolism; polyunsaturated fatty acid biosynthesis. Chloroplast omega-6 fatty acid desaturase introduces the second double bond in the biosynthesis of 16:3 and 18:3 fatty acids, important constituents of plant membranes. It is thought to use ferredoxin as an electron donor and to act on fatty acids esterified to galactolipids, sulfolipids and phosphatidylglycerol. The protein is Omega-6 fatty acid desaturase, chloroplastic of Spinacia oleracea (Spinach).